The following is a 172-amino-acid chain: Outer-membrane lipoprotein carrier protein (172 aa).

An N-terminal signal peptide occupies residues Met-1–Ala-16.

It belongs to the LolA family. In terms of assembly, monomer.

It is found in the periplasm. Participates in the translocation of lipoproteins from the inner membrane to the outer membrane. Only forms a complex with a lipoprotein if the residue after the N-terminal Cys is not an aspartate (The Asp acts as a targeting signal to indicate that the lipoprotein should stay in the inner membrane). The sequence is that of Outer-membrane lipoprotein carrier protein from Wolinella succinogenes (strain ATCC 29543 / DSM 1740 / CCUG 13145 / JCM 31913 / LMG 7466 / NCTC 11488 / FDC 602W) (Vibrio succinogenes).